Here is a 357-residue protein sequence, read N- to C-terminus: Elongation factor Ts (357 aa).

The involved in Mg(2+) ion dislocation from EF-Tu stretch occupies residues 82–85 (TDFV).

The protein belongs to the EF-Ts family.

The protein resides in the cytoplasm. Associates with the EF-Tu.GDP complex and induces the exchange of GDP to GTP. It remains bound to the aminoacyl-tRNA.EF-Tu.GTP complex up to the GTP hydrolysis stage on the ribosome. This chain is Elongation factor Ts, found in Campylobacter jejuni subsp. jejuni serotype O:23/36 (strain 81-176).